The chain runs to 481 residues: Proline--tRNA ligase (481 aa).

It belongs to the class-II aminoacyl-tRNA synthetase family. ProS type 3 subfamily. In terms of assembly, homodimer.

Its subcellular location is the cytoplasm. It carries out the reaction tRNA(Pro) + L-proline + ATP = L-prolyl-tRNA(Pro) + AMP + diphosphate. In terms of biological role, catalyzes the attachment of proline to tRNA(Pro) in a two-step reaction: proline is first activated by ATP to form Pro-AMP and then transferred to the acceptor end of tRNA(Pro). In Prosthecochloris aestuarii (strain DSM 271 / SK 413), this protein is Proline--tRNA ligase.